Consider the following 803-residue polypeptide: Ribonuclease II, chloroplastic/mitochondrial (803 aa).

Residues 1 to 35 (MMSVRAINGCSIIRTATSAGGPPVSLFRHRIQRLR) constitute a chloroplast and mitochondrion transit peptide. An RNB domain is found at 399-694 (RIDLTHLKVY…AHYQIKAFLR (296 aa)).

The protein belongs to the RNR ribonuclease family. Expressed in seedlings, roots, leaves and flowers.

It localises to the mitochondrion. The protein localises to the plastid. The protein resides in the chloroplast. The enzyme catalyses Exonucleolytic cleavage in the 3'- to 5'-direction to yield nucleoside 5'-phosphates.. Its function is as follows. 3'-5' exoribonuclease that catalyzes 3' maturation of chloroplast and mitochondrion ribosomal RNAs; degrades short nucleotidic extensions to generate the mature 3'-ends. Involved in the maturation of 23S, 16S and 5S rRNAs. This Arabidopsis thaliana (Mouse-ear cress) protein is Ribonuclease II, chloroplastic/mitochondrial (RNR1).